A 577-amino-acid polypeptide reads, in one-letter code: Phosphoethanolamine transferase EptC (577 aa).

5 consecutive transmembrane segments (helical) span residues 17–37, 44–64, 69–89, 119–139, and 154–174; these read LGWALLYFWFFSTLLQAIIYI, NGIRDSLLFSSLWLIPVFLFP, IIAAVIGVVLWAASLAALCYY, YFSLKIVLIALAYTAVAVLLW, and VVSFALLYGLILHPIAMNTFI.

The protein belongs to the phosphoethanolamine transferase family. EptC/CptA subfamily.

The protein resides in the cell inner membrane. It participates in bacterial outer membrane biogenesis; LPS core biosynthesis. In terms of biological role, catalyzes the addition of a phosphoethanolamine moiety to the outer membrane lipopolysaccharide core. Plays a role in the pathogenesis of E.coli meningitis. Required for invasion of E.coli K1 into brain microvascular endothelial cells (BMEC). Contributes to E.coli traversal across the blood-brain barrier. In Escherichia coli O18:K1:H7 (strain RS218 / NMEC), this protein is Phosphoethanolamine transferase EptC (eptC).